We begin with the raw amino-acid sequence, 1011 residues long: Vacuolar membrane protease (1011 aa).

At 1–9 the chain is on the cytoplasmic side; the sequence is MSNPFAFRS. A helical transmembrane segment spans residues 10–30; it reads AQVTFWTTVVYLALLVPLVVI. At 31-378 the chain is on the vacuolar side; sequence NEGVPPVQPD…TFVLFGLRGM (348 aa). Asparagine 50 and asparagine 106 each carry an N-linked (GlcNAc...) asparagine glycan. The Zn(2+) site is built by histidine 159 and aspartate 171. Glutamate 205 functions as the Proton acceptor in the catalytic mechanism. Zn(2+) contacts are provided by glutamate 206, glutamate 231, and histidine 304. Asparagine 331 is a glycosylation site (N-linked (GlcNAc...) asparagine). The chain crosses the membrane as a helical span at residues 379-399; sequence FAWSLTVLIVGPLTLFGMMYL. At 400–439 the chain is on the cytoplasmic side; sequence VHKQGKGYAFHTKLRATSDSSSEDGDDEDGEVIRLGGWKG. Residues 440–460 traverse the membrane as a helical segment; sequence FFRFPFALIVAGALVTGAALL. Residues 461–471 lie on the Vacuolar side of the membrane; the sequence is LRKMNPFIIYS. A helical transmembrane segment spans residues 472–492; sequence SEYAVWAMMISLFYFGFWLIM. The Cytoplasmic portion of the chain corresponds to 493–505; that stretch reads RGSSYTRPSALHR. The helical transmembrane segment at 506 to 526 threads the bilayer; sequence LYVHIWLFILGWVALVFATVL. The Vacuolar portion of the chain corresponds to 527–536; sequence EDRMRIASGY. The chain crosses the membrane as a helical span at residues 537-557; sequence IFVFWESQVFLATLVAVCELF. At 558–682 the chain is on the cytoplasmic side; sequence SLPRKIDFAR…WSGPMVTSTW (125 aa). Over residues 595–609 the composition is skewed to polar residues; sequence EATSPQRAGQSSNSP. Disordered stretches follow at residues 595–627 and 650–671; these read EATS…LFRK and IMDS…EGEQ. A compositionally biased stretch (acidic residues) spans 610–622; that stretch reads QEDDEDDVPDEET. A helical membrane pass occupies residues 683 to 703; that stretch reads ILQFLLLGPFMVILGGQVGLL. Residues 704 to 719 are Vacuolar-facing; that stretch reads LTSAVNQTGVDGSSLL. N-linked (GlcNAc...) asparagine glycosylation is present at asparagine 709. A helical transmembrane segment spans residues 720–740; it reads APYLMIAALSAILLMPLSPFI. Residues 741–747 lie on the Cytoplasmic side of the membrane; sequence HRVTKHV. Residues 748 to 768 form a helical membrane-spanning segment; it reads PLFLLAVAFATLIYSLVAFPF. Residues 769-1011 lie on the Vacuolar side of the membrane; the sequence is SPRAPYKTFF…LVEGSKAFKV (243 aa). Residue asparagine 872 is glycosylated (N-linked (GlcNAc...) asparagine).

This sequence belongs to the peptidase M28 family. The cofactor is Zn(2+).

The protein resides in the vacuole membrane. May be involved in vacuolar sorting and osmoregulation. The protein is Vacuolar membrane protease of Pyricularia oryzae (strain 70-15 / ATCC MYA-4617 / FGSC 8958) (Rice blast fungus).